We begin with the raw amino-acid sequence, 275 residues long: Large ribosomal subunit protein uL2 (275 aa).

The tract at residues 212 to 259 is disordered; it reads RWKGIRPTNRGVTMNPVDHPHGGGEGKTSGGRHPVTPWGQPTRGYKTR.

Belongs to the universal ribosomal protein uL2 family. As to quaternary structure, part of the 50S ribosomal subunit. Forms a bridge to the 30S subunit in the 70S ribosome.

Its function is as follows. One of the primary rRNA binding proteins. Required for association of the 30S and 50S subunits to form the 70S ribosome, for tRNA binding and peptide bond formation. It has been suggested to have peptidyltransferase activity; this is somewhat controversial. Makes several contacts with the 16S rRNA in the 70S ribosome. This chain is Large ribosomal subunit protein uL2, found in Acidobacterium capsulatum (strain ATCC 51196 / DSM 11244 / BCRC 80197 / JCM 7670 / NBRC 15755 / NCIMB 13165 / 161).